The chain runs to 208 residues: 3-isopropylmalate dehydratase small subunit 2 (208 aa).

This sequence belongs to the LeuD family. LeuD type 1 subfamily. In terms of assembly, heterodimer of LeuC and LeuD.

It carries out the reaction (2R,3S)-3-isopropylmalate = (2S)-2-isopropylmalate. It functions in the pathway amino-acid biosynthesis; L-leucine biosynthesis; L-leucine from 3-methyl-2-oxobutanoate: step 2/4. Functionally, catalyzes the isomerization between 2-isopropylmalate and 3-isopropylmalate, via the formation of 2-isopropylmaleate. The sequence is that of 3-isopropylmalate dehydratase small subunit 2 (leuD2) from Salmonella typhimurium (strain LT2 / SGSC1412 / ATCC 700720).